The chain runs to 57 residues: uncharacterized protein (57 aa).

This is an uncharacterized protein from Archaeoglobus fulgidus (strain ATCC 49558 / DSM 4304 / JCM 9628 / NBRC 100126 / VC-16).